The chain runs to 265 residues: Elongation factor 1-delta (265 aa).

Residues 31–54 (MGSASNKPHNSPQSAASALSNSGD) show a composition bias toward polar residues. 2 disordered regions span residues 31 to 64 (MGSA…RVAN) and 118 to 155 (KVQV…DAEA). Residues 130-153 (GTGEDDDDDDDIDLFGSDNEEEDA) are compositionally biased toward acidic residues.

Belongs to the EF-1-beta/EF-1-delta family. EF-1 is composed of 4 subunits: alpha, beta, delta, and gamma.

EF-1-beta and EF-1-delta stimulate the exchange of GDP bound to EF-1-alpha to GTP. This Xenopus laevis (African clawed frog) protein is Elongation factor 1-delta (eef1d).